Reading from the N-terminus, the 573-residue chain is Developmental and secondary metabolism regulator VEL1 (573 aa).

A Velvet domain is found at 26–220; that stretch reads NRHLWYQLTV…ADQGCRVRIR (195 aa). Positions 40 to 45 match the Nuclear localization signal motif; that stretch reads ERARAC. A disordered region spans residues 222–520; the sequence is DVRMRKRDGK…STGGKRKHDH (299 aa). Positions 230 to 245 are enriched in basic and acidic residues; sequence GKGSGFDRRGEEEYSR. Composition is skewed to pro residues over residues 291–310 and 341–351; these read APPPLPPPPPSSYDAPPPAA and APIPPATPTGP. Over residues 352–363 the composition is skewed to low complexity; sequence YPTSSAAPSPYA. A compositionally biased stretch (pro residues) spans 379–389; it reads PPAPSASPAPP. A compositionally biased stretch (polar residues) spans 432–448; it reads TPASQPTYSTPASQPTY. Over residues 458 to 475 the composition is skewed to pro residues; the sequence is SAPPPAPYSAPAPPPPRP. The PEST stretch occupies residues 476–504; the sequence is SMSQSSLAPLKIASLVSPLPPIEAQTEPL.

Belongs to the velvet family. VeA subfamily. In terms of assembly, component of the heterotrimeric velvet complex composed of LAE1, VEL1 and VEL2; VEL1 acting as a bridging protein between LAE1 and VEL2. Interacts with LAE1.

It localises to the nucleus. The protein resides in the cytoplasm. In terms of biological role, component of the velvet transcription factor complex that controls sexual/asexual developmental ratio in response to light, promoting sexual development in the darkness while stimulating asexual sporulation under illumination. The velvet complex hat acts as a global regulator for secondary metabolite gene expression. Regulates expression of the carbohydrate-active enzyme gene clusters. This Hypocrea jecorina (strain QM6a) (Trichoderma reesei) protein is Developmental and secondary metabolism regulator VEL1.